The sequence spans 162 residues: ATP synthase subunit b (162 aa).

A helical transmembrane segment spans residues 6 to 28; sequence LVTFVLTIVNILVLFYLLKRFLF.

This sequence belongs to the ATPase B chain family. As to quaternary structure, F-type ATPases have 2 components, F(1) - the catalytic core - and F(0) - the membrane proton channel. F(1) has five subunits: alpha(3), beta(3), gamma(1), delta(1), epsilon(1). F(0) has three main subunits: a(1), b(2) and c(10-14). The alpha and beta chains form an alternating ring which encloses part of the gamma chain. F(1) is attached to F(0) by a central stalk formed by the gamma and epsilon chains, while a peripheral stalk is formed by the delta and b chains.

The protein localises to the cell membrane. In terms of biological role, f(1)F(0) ATP synthase produces ATP from ADP in the presence of a proton or sodium gradient. F-type ATPases consist of two structural domains, F(1) containing the extramembraneous catalytic core and F(0) containing the membrane proton channel, linked together by a central stalk and a peripheral stalk. During catalysis, ATP synthesis in the catalytic domain of F(1) is coupled via a rotary mechanism of the central stalk subunits to proton translocation. Its function is as follows. Component of the F(0) channel, it forms part of the peripheral stalk, linking F(1) to F(0). The chain is ATP synthase subunit b from Natranaerobius thermophilus (strain ATCC BAA-1301 / DSM 18059 / JW/NM-WN-LF).